Here is a 303-residue protein sequence, read N- to C-terminus: GTPase Era (303 aa).

In terms of domain architecture, Era-type G spans lysine 7 to glutamate 174. Residues glycine 15–serine 22 are G1. Residue glycine 15 to serine 22 coordinates GTP. Positions glutamine 41 to asparagine 45 are G2. A G3 region spans residues aspartate 62–glycine 65. GTP-binding positions include aspartate 62–isoleucine 66 and asparagine 124–aspartate 127. Positions asparagine 124–aspartate 127 are G4. The interval isoleucine 153–alanine 155 is G5. In terms of domain architecture, KH type-2 spans threonine 205–asparagine 283.

It belongs to the TRAFAC class TrmE-Era-EngA-EngB-Septin-like GTPase superfamily. Era GTPase family. In terms of assembly, monomer.

It is found in the cytoplasm. The protein localises to the cell membrane. Its function is as follows. An essential GTPase that binds both GDP and GTP, with rapid nucleotide exchange. Plays a role in 16S rRNA processing and 30S ribosomal subunit biogenesis and possibly also in cell cycle regulation and energy metabolism. The chain is GTPase Era from Lactococcus lactis subsp. lactis (strain IL1403) (Streptococcus lactis).